Consider the following 210-residue polypeptide: dTTP/UTP pyrophosphatase (210 aa).

Residues 1–15 (MTHGDNRDGPGRETR) show a composition bias toward basic and acidic residues. The segment at 1 to 22 (MTHGDNRDGPGRETRSSGPLVL) is disordered. The active-site Proton acceptor is the Asp-86.

It belongs to the Maf family. YhdE subfamily. It depends on a divalent metal cation as a cofactor.

It is found in the cytoplasm. The enzyme catalyses dTTP + H2O = dTMP + diphosphate + H(+). It carries out the reaction UTP + H2O = UMP + diphosphate + H(+). Functionally, nucleoside triphosphate pyrophosphatase that hydrolyzes dTTP and UTP. May have a dual role in cell division arrest and in preventing the incorporation of modified nucleotides into cellular nucleic acids. The sequence is that of dTTP/UTP pyrophosphatase from Rhodospirillum rubrum (strain ATCC 11170 / ATH 1.1.1 / DSM 467 / LMG 4362 / NCIMB 8255 / S1).